The primary structure comprises 654 residues: MENFMRIDSKESYENAVATLNAWAKAYYDDDAPIASDEEYDALYHEVLAYEQVNPAQKSLFSPTTRIGGGVSEGFSKARHIKQMWSMEDIFSQLELVAWLKRGEKQNLSFVAEPKFDGASLNLLYEKGMLVRAITRGDGITGEEVTQNARVIKSIPLNISYDGRIEIRGEVVIKKADFDAINEERTRNGETLLSNPRNAAAGSLRQLDSAVTAKRKLLFIPWGVGEQNLGLAKHSEVMKFVRDLGFYRDDFFKILDADGLAGAYNELLKQRDEKDVMMDGMVIRVDDLARCEELGYTVKFPKFMVAFKFPAIEKTTRLLDVALQVGRSGVVTPVGVLDEVVIDGARVKSATLHNFDEIERLGVMKNDLISIIRSGDVIPKITSVFKERRDGTQTPIIRPKFCPECGSHLLDEGVFIKCQNLNCRARVINSIIHYASKKCLNIDGLGEAIINLLYEKGLISRVIDIYSLKFEDLMALEGFKDKKAQNLLDAIEASKGASLARFITGLGCEHIGEVAAKKIAQNFGEGWLEADFDEVKNLEGFGEEMANSLMDFIEVNKDEILALQSIVRPSFERKQITQNAFSGKSVVITGTLSRPRDEIKAELEGYGAKVVGSVSKKTDFVLAGSNAGSKLQKAVELGVRVIDEGEFERLKLEI.

NAD(+)-binding positions include 37-41, 86-87, and Glu-113; these read DEEYD and SM. Residue Lys-115 is the N6-AMP-lysine intermediate of the active site. 3 residues coordinate NAD(+): Arg-136, Glu-170, and Lys-308. 4 residues coordinate Zn(2+): Cys-402, Cys-405, Cys-418, and Cys-423. The BRCT domain occupies 576–654; the sequence is ITQNAFSGKS…GEFERLKLEI (79 aa).

This sequence belongs to the NAD-dependent DNA ligase family. LigA subfamily. It depends on Mg(2+) as a cofactor. The cofactor is Mn(2+).

The catalysed reaction is NAD(+) + (deoxyribonucleotide)n-3'-hydroxyl + 5'-phospho-(deoxyribonucleotide)m = (deoxyribonucleotide)n+m + AMP + beta-nicotinamide D-nucleotide.. In terms of biological role, DNA ligase that catalyzes the formation of phosphodiester linkages between 5'-phosphoryl and 3'-hydroxyl groups in double-stranded DNA using NAD as a coenzyme and as the energy source for the reaction. It is essential for DNA replication and repair of damaged DNA. This is DNA ligase from Campylobacter curvus (strain 525.92).